The following is a 526-amino-acid chain: Na(+)/H(+) antiporter NhaB (526 aa).

11 helical membrane passes run 14-34 (FLGY…LVNP), 63-83 (CYPL…GMTS), 99-119 (MLLV…LFVF), 122-142 (LLLR…AAAF), 146-166 (FLDA…FYGI), 206-226 (LLMH…VGEP), 239-259 (FVSF…CGIL), 307-327 (AVIG…VGLI), 357-377 (FTAL…QQLF), 451-471 (ATPN…APLI), and 479-499 (VIMA…CVEF).

The protein belongs to the NhaB Na(+)/H(+) (TC 2.A.34) antiporter family.

Its subcellular location is the cell inner membrane. It carries out the reaction 2 Na(+)(in) + 3 H(+)(out) = 2 Na(+)(out) + 3 H(+)(in). Functionally, na(+)/H(+) antiporter that extrudes sodium in exchange for external protons. In Pectobacterium carotovorum subsp. carotovorum (strain PC1), this protein is Na(+)/H(+) antiporter NhaB.